Reading from the N-terminus, the 674-residue chain is MMDTDKDDLPSATDHSEHESGDAVKVEGGASKTASNSKDPSRPRRKKARRACFACQRAHLTCGDERPCQRCIKRGLQDACHDGVRKKAKYLHDAPDGALVPGAQGNFYNQANGLPKISPTEYTQNGTNNAQQQQQKSGTIYASSTPSYNNNNGTFDTNNATNTVLPDSAALNPGPFTATPASPTFSISTSSAMPSLTQPTNDMTSGAGQGSFGAFFDPSDPALFNFDLASMNFGNRYGALEFGMLGHMATGAGDTPPSDNGNQRGGSVGQRSNSQQFGNPPGAFTTESPSQQSFMFGDPVLNDWSGGQNTNPRMNVGSGLYGQGGGGGGGMHLLQQDAPHAYAIGSNTFASPSSTTSPHATTIAPSQFDDSPMKTKTVISTPHLRQQSLYNSNSNKRRHREPSAIYDSVKEPYSYTGGFHKLIAFIKRRFSPPKTVRIAKALASIRPSFIATTKTLNQDDLIFMEKCFQRTLWEYEDFINACGTPTIVCRRTGEVAAVGKEFSILTGWKKEVLLGKEPNLNVNTGGGNNTSSQSDSTSSSIRGGAGGRMRNQEPGPNNMAPVFLAELLDDDSVIEFYEDFARLAFGDSRGSVMNTCKLLKYKTKEDMDSVNADDSRWNSAMTHHIVGKGGIVGEAGMNRLGFKDGRVECSYCWTVKRDVFDIPMLIVMNFLPHI.

The tract at residues 1–46 (MMDTDKDDLPSATDHSEHESGDAVKVEGGASKTASNSKDPSRPRRK) is disordered. The segment covering 14–25 (DHSEHESGDAVK) has biased composition (basic and acidic residues). A DNA-binding region (zn(2)-C6 fungal-type) is located at residues 52–80 (CFACQRAHLTCGDERPCQRCIKRGLQDAC). 4 disordered regions span residues 117–181 (ISPT…ATPA), 250–321 (TGAG…SGLY), 344–374 (IGSNTFASPSSTTSPHATTIAPSQFDDSPMK), and 519–557 (NLNVNTGGGNNTSSQSDSTSSSIRGGAGGRMRNQEPGPN). Residues 120–148 (TEYTQNGTNNAQQQQQKSGTIYASSTPSY) show a composition bias toward polar residues. Low complexity predominate over residues 149–163 (NNNNGTFDTNNATNT). Polar residues-rich tracts occupy residues 269–278 (GQRSNSQQFG) and 285–294 (TTESPSQQSF). Low complexity-rich tracts occupy residues 348–366 (TFASPSSTTSPHATTIAPS) and 529–540 (NTSSQSDSTSSS).

The protein belongs to the ERT1/acuK family.

It is found in the nucleus. Its function is as follows. Transcription factor which regulates nonfermentable carbon utilization. Activator of gluconeogenetic genes. The chain is Transcription activator of gluconeogenesis PMAA_028970 from Talaromyces marneffei (strain ATCC 18224 / CBS 334.59 / QM 7333) (Penicillium marneffei).